The chain runs to 64 residues: Large ribosomal subunit protein bL35 (64 aa).

It belongs to the bacterial ribosomal protein bL35 family.

The protein is Large ribosomal subunit protein bL35 of Alcanivorax borkumensis (strain ATCC 700651 / DSM 11573 / NCIMB 13689 / SK2).